A 209-amino-acid polypeptide reads, in one-letter code: Large ribosomal subunit protein bL25 (209 aa).

The disordered stretch occupies residues 190 to 209 (GLKSADDEAEGEDAEEAAAE). Over residues 196-209 (DEAEGEDAEEAAAE) the composition is skewed to acidic residues.

This sequence belongs to the bacterial ribosomal protein bL25 family. CTC subfamily. As to quaternary structure, part of the 50S ribosomal subunit; part of the 5S rRNA/L5/L18/L25 subcomplex. Contacts the 5S rRNA. Binds to the 5S rRNA independently of L5 and L18.

Its function is as follows. This is one of the proteins that binds to the 5S RNA in the ribosome where it forms part of the central protuberance. The protein is Large ribosomal subunit protein bL25 of Ruegeria sp. (strain TM1040) (Silicibacter sp.).